The sequence spans 431 residues: 3-phosphoshikimate 1-carboxyvinyltransferase (431 aa).

Residues Lys-26, Ser-27, and Arg-31 each contribute to the 3-phosphoshikimate site. Phosphoenolpyruvate is bound at residue Lys-26. Residues Gly-99 and Arg-127 each contribute to the phosphoenolpyruvate site. 6 residues coordinate 3-phosphoshikimate: Ser-170, Ser-171, Gln-172, Ser-199, Glu-314, and His-343. Gln-172 contacts phosphoenolpyruvate. Glu-314 functions as the Proton acceptor in the catalytic mechanism. Residues Arg-347, Arg-388, and Lys-413 each contribute to the phosphoenolpyruvate site.

It belongs to the EPSP synthase family. Monomer.

The protein resides in the cytoplasm. It catalyses the reaction 3-phosphoshikimate + phosphoenolpyruvate = 5-O-(1-carboxyvinyl)-3-phosphoshikimate + phosphate. Its pathway is metabolic intermediate biosynthesis; chorismate biosynthesis; chorismate from D-erythrose 4-phosphate and phosphoenolpyruvate: step 6/7. Functionally, catalyzes the transfer of the enolpyruvyl moiety of phosphoenolpyruvate (PEP) to the 5-hydroxyl of shikimate-3-phosphate (S3P) to produce enolpyruvyl shikimate-3-phosphate and inorganic phosphate. The sequence is that of 3-phosphoshikimate 1-carboxyvinyltransferase from Mycobacterium ulcerans (strain Agy99).